The primary structure comprises 122 residues: Large ribosomal subunit protein uL14 (122 aa).

It belongs to the universal ribosomal protein uL14 family. As to quaternary structure, part of the 50S ribosomal subunit. Forms a cluster with proteins L3 and L19. In the 70S ribosome, L14 and L19 interact and together make contacts with the 16S rRNA in bridges B5 and B8.

Functionally, binds to 23S rRNA. Forms part of two intersubunit bridges in the 70S ribosome. This is Large ribosomal subunit protein uL14 from Mesomycoplasma hyopneumoniae (strain 232) (Mycoplasma hyopneumoniae).